An 83-amino-acid polypeptide reads, in one-letter code: Small ribosomal subunit protein bS16 (83 aa).

It belongs to the bacterial ribosomal protein bS16 family.

The polypeptide is Small ribosomal subunit protein bS16 (Pseudomonas aeruginosa (strain LESB58)).